The chain runs to 489 residues: Rhamnulokinase (489 aa).

Alanine 13–arginine 17 contacts ATP. Cysteine 68 and cysteine 222 are joined by a disulfide. Substrate contacts are provided by residues glycine 83 and histidine 236–threonine 238. The Proton acceptor role is filled by aspartate 237. Threonine 259 contributes to the ATP binding site. Asparagine 296 serves as a coordination point for substrate. Glutamine 304 provides a ligand contact to ATP. A disulfide bond links cysteine 353 and cysteine 370. Glycine 402 provides a ligand contact to ATP. The cysteines at positions 413 and 417 are disulfide-linked.

Belongs to the rhamnulokinase family. Monomer. Mg(2+) is required as a cofactor.

The enzyme catalyses L-rhamnulose + ATP = L-rhamnulose 1-phosphate + ADP + H(+). The protein operates within carbohydrate degradation; L-rhamnose degradation; glycerone phosphate from L-rhamnose: step 2/3. Involved in the catabolism of L-rhamnose (6-deoxy-L-mannose). Catalyzes the transfer of the gamma-phosphate group from ATP to the 1-hydroxyl group of L-rhamnulose to yield L-rhamnulose 1-phosphate. This chain is Rhamnulokinase, found in Escherichia coli O9:H4 (strain HS).